The sequence spans 206 residues: HTH-type transcriptional regulator BetI (206 aa).

Residues 8-68 enclose the HTH tetR-type domain; it reads PLRRKALVDA…ETIRSLLRDL (61 aa). The H-T-H motif DNA-binding region spans 31–50; that stretch reads TMSDIAREAGVSAALAHHYF.

Its pathway is amine and polyamine biosynthesis; betaine biosynthesis via choline pathway [regulation]. In terms of biological role, repressor involved in the biosynthesis of the osmoprotectant glycine betaine. It represses transcription of the choline transporter BetT and the genes of BetAB involved in the synthesis of glycine betaine. The protein is HTH-type transcriptional regulator BetI of Agrobacterium fabrum (strain C58 / ATCC 33970) (Agrobacterium tumefaciens (strain C58)).